We begin with the raw amino-acid sequence, 270 residues long: MSEFKIVSRKDLYNEGEGLGEDYDSNSSSKNNSEHVEVLVPPTEFEFVEVERTDSSLDLKESNNSAHEQKEEKQEEFEFPLFSFGVVEASTSPAQEEQGSSTQEKDTPQTEVSLMKISLKEPEEEIINQERPKDYYFASYSADQKLQFQQSSIDYDVIIQESTKILEDDLRIRDKWPYCQGRIIDLYKHNARIELEQQKELKIKKRRPGQKQRAAKKLALERTKERDTKAREIKKQLKKKFHKRGGKKNKKKVPLNPLAKAGSTPKFRTE.

Composition is skewed to basic and acidic residues over residues 1–13 (MSEF…KDLY) and 49–73 (EVER…KEEK). 3 disordered regions span residues 1 to 76 (MSEF…KQEE), 90 to 111 (STSP…PQTE), and 204 to 270 (KKRR…FRTE). Over residues 90 to 102 (STSPAQEEQGSST) the composition is skewed to polar residues. Residues 204–216 (KKRRPGQKQRAAK) are compositionally biased toward basic residues. Residues 218-235 (LALERTKERDTKAREIKK) are compositionally biased toward basic and acidic residues. Residues 236-253 (QLKKKFHKRGGKKNKKKV) are compositionally biased toward basic residues.

This is an uncharacterized protein from Saccharomyces cerevisiae (strain ATCC 204508 / S288c) (Baker's yeast).